The following is a 383-amino-acid chain: Acetylornithine deacetylase (383 aa).

Histidine 80 contacts Zn(2+). Aspartate 82 is a catalytic residue. Aspartate 112 is a Zn(2+) binding site. Residue glutamate 144 is part of the active site. The Zn(2+) site is built by glutamate 145, glutamate 169, and histidine 355.

This sequence belongs to the peptidase M20A family. ArgE subfamily. In terms of assembly, homodimer. Zn(2+) is required as a cofactor. The cofactor is Co(2+). Glutathione serves as cofactor.

The protein resides in the cytoplasm. It carries out the reaction N(2)-acetyl-L-ornithine + H2O = L-ornithine + acetate. It functions in the pathway amino-acid biosynthesis; L-arginine biosynthesis; L-ornithine from N(2)-acetyl-L-ornithine (linear): step 1/1. In terms of biological role, catalyzes the hydrolysis of the amide bond of N(2)-acetylated L-amino acids. Cleaves the acetyl group from N-acetyl-L-ornithine to form L-ornithine, an intermediate in L-arginine biosynthesis pathway, and a branchpoint in the synthesis of polyamines. The sequence is that of Acetylornithine deacetylase from Erwinia tasmaniensis (strain DSM 17950 / CFBP 7177 / CIP 109463 / NCPPB 4357 / Et1/99).